Here is a 407-residue protein sequence, read N- to C-terminus: 1-deoxy-D-xylulose 5-phosphate reductoisomerase (407 aa).

The NADPH site is built by threonine 25, glycine 26, serine 27, isoleucine 28, asparagine 53, and asparagine 136. Lysine 137 lines the 1-deoxy-D-xylulose 5-phosphate pocket. Glutamate 138 contacts NADPH. Aspartate 162 lines the Mn(2+) pocket. 1-deoxy-D-xylulose 5-phosphate-binding residues include serine 163, glutamate 164, serine 188, and histidine 211. Residue glutamate 164 participates in Mn(2+) binding. Glycine 217 contributes to the NADPH binding site. 4 residues coordinate 1-deoxy-D-xylulose 5-phosphate: serine 224, asparagine 229, lysine 230, and glutamate 233. Residue glutamate 233 participates in Mn(2+) binding.

The protein belongs to the DXR family. It depends on Mg(2+) as a cofactor. The cofactor is Mn(2+).

The enzyme catalyses 2-C-methyl-D-erythritol 4-phosphate + NADP(+) = 1-deoxy-D-xylulose 5-phosphate + NADPH + H(+). The protein operates within isoprenoid biosynthesis; isopentenyl diphosphate biosynthesis via DXP pathway; isopentenyl diphosphate from 1-deoxy-D-xylulose 5-phosphate: step 1/6. Functionally, catalyzes the NADPH-dependent rearrangement and reduction of 1-deoxy-D-xylulose-5-phosphate (DXP) to 2-C-methyl-D-erythritol 4-phosphate (MEP). The sequence is that of 1-deoxy-D-xylulose 5-phosphate reductoisomerase from Afipia carboxidovorans (strain ATCC 49405 / DSM 1227 / KCTC 32145 / OM5) (Oligotropha carboxidovorans).